The primary structure comprises 55 residues: Conotoxin Cal22c (55 aa).

A propeptide spanning residues 1–5 (GRPSA) is cleaved from the precursor.

Contains 4 disulfide bonds. In terms of tissue distribution, expressed by the venom duct.

It is found in the secreted. Functionally, probable neurotoxin with unknown target. Possibly targets ion channels. This chain is Conotoxin Cal22c, found in Californiconus californicus (California cone).